We begin with the raw amino-acid sequence, 436 residues long: Gamma-glutamyl phosphate reductase (436 aa).

This sequence belongs to the gamma-glutamyl phosphate reductase family.

It localises to the cytoplasm. It catalyses the reaction L-glutamate 5-semialdehyde + phosphate + NADP(+) = L-glutamyl 5-phosphate + NADPH + H(+). Its pathway is amino-acid biosynthesis; L-proline biosynthesis; L-glutamate 5-semialdehyde from L-glutamate: step 2/2. Functionally, catalyzes the NADPH-dependent reduction of L-glutamate 5-phosphate into L-glutamate 5-semialdehyde and phosphate. The product spontaneously undergoes cyclization to form 1-pyrroline-5-carboxylate. The polypeptide is Gamma-glutamyl phosphate reductase (Prochlorococcus marinus (strain SARG / CCMP1375 / SS120)).